A 199-amino-acid chain; its full sequence is MSSKGPSYRIENIVATVNLGVELDLEQLAERLTMAEYNPDQFPGLILRLTKPRISALIFRTGKMVCTGAKNEEDLKNAVRALVKLLKDHGADVPFDPEVQIQNIVASGNLHAEVDLEQAVLMLENAMYEPEQFPGLIYRMSSPRVVILIFGSGKIVCTGAKSEKDVATAVQKLYNQLKELGVLYVEEGGEELEEFEEEL.

A run of 2 repeats spans residues 10–86 (IENI…VKLL) and 101–177 (IQNI…YNQL).

Belongs to the TBP family.

General factor that plays a role in the activation of archaeal genes transcribed by RNA polymerase. Binds specifically to the TATA box promoter element which lies close to the position of transcription initiation. The polypeptide is TATA-box-binding protein (Pyrobaculum aerophilum (strain ATCC 51768 / DSM 7523 / JCM 9630 / CIP 104966 / NBRC 100827 / IM2)).